Here is a 288-residue protein sequence, read N- to C-terminus: HTH-type transcriptional regulator CzcR (288 aa).

An HTH lysR-type domain is found at 1–58 (MELRDLQIFKCVAHHKSITGAAKELNYVQSNVTARIKQLENELKTPLFNRHKKGVSLS). The segment at residues 18–37 (ITGAAKELNYVQSNVTARIK) is a DNA-binding region (H-T-H motif).

Belongs to the LysR transcriptional regulatory family.

This Bacillus subtilis (strain 168) protein is HTH-type transcriptional regulator CzcR (czcR).